A 189-amino-acid chain; its full sequence is GMP synthase [glutamine-hydrolyzing] subunit A (189 aa).

In terms of domain architecture, Glutamine amidotransferase type-1 spans 1 to 189 (MIVILNNGGQ…CKKCGFGFEE (189 aa)). The active-site Nucleophile is C76. Catalysis depends on residues H163 and E165.

Heterodimer composed of a glutamine amidotransferase subunit (A) and a GMP-binding subunit (B).

It catalyses the reaction XMP + L-glutamine + ATP + H2O = GMP + L-glutamate + AMP + diphosphate + 2 H(+). The protein operates within purine metabolism; GMP biosynthesis; GMP from XMP (L-Gln route): step 1/1. In terms of biological role, catalyzes the synthesis of GMP from XMP. This is GMP synthase [glutamine-hydrolyzing] subunit A from Methanococcus maripaludis (strain DSM 14266 / JCM 13030 / NBRC 101832 / S2 / LL).